The following is a 662-amino-acid chain: UvrABC system protein B (662 aa).

One can recognise a Helicase ATP-binding domain in the interval 25–414 (AGLNSKKRSQ…GTVVELIIRP (390 aa)). 38-45 (GITGSGKT) contributes to the ATP binding site. The Beta-hairpin signature appears at 91-114 (YYDYYQPEAYIVRTDTFIEKDSSI). The 163-residue stretch at 430 to 592 (QVEDLISEIQ…IIPKTINSAI (163 aa)) folds into the Helicase C-terminal domain. The region spanning 622-657 (KSYMDKLKKEMFKAASNLEFEQAAKLRNQLKTLEKA) is the UVR domain.

It belongs to the UvrB family. Forms a heterotetramer with UvrA during the search for lesions. Interacts with UvrC in an incision complex.

Its subcellular location is the cytoplasm. Functionally, the UvrABC repair system catalyzes the recognition and processing of DNA lesions. A damage recognition complex composed of 2 UvrA and 2 UvrB subunits scans DNA for abnormalities. Upon binding of the UvrA(2)B(2) complex to a putative damaged site, the DNA wraps around one UvrB monomer. DNA wrap is dependent on ATP binding by UvrB and probably causes local melting of the DNA helix, facilitating insertion of UvrB beta-hairpin between the DNA strands. Then UvrB probes one DNA strand for the presence of a lesion. If a lesion is found the UvrA subunits dissociate and the UvrB-DNA preincision complex is formed. This complex is subsequently bound by UvrC and the second UvrB is released. If no lesion is found, the DNA wraps around the other UvrB subunit that will check the other stand for damage. This chain is UvrABC system protein B, found in Rickettsia typhi (strain ATCC VR-144 / Wilmington).